The chain runs to 143 residues: Large ribosomal subunit protein uL11 (143 aa).

This sequence belongs to the universal ribosomal protein uL11 family. Part of the ribosomal stalk of the 50S ribosomal subunit. Interacts with L10 and the large rRNA to form the base of the stalk. L10 forms an elongated spine to which L12 dimers bind in a sequential fashion forming a multimeric L10(L12)X complex. Post-translationally, one or more lysine residues are methylated.

Forms part of the ribosomal stalk which helps the ribosome interact with GTP-bound translation factors. The protein is Large ribosomal subunit protein uL11 of Nitrosomonas eutropha (strain DSM 101675 / C91 / Nm57).